Consider the following 387-residue polypeptide: Odorant receptor 19a (387 aa).

Over 1–40 the chain is Cytoplasmic; that stretch reads MDISKVDSTRALVNHWRIFRIMGIHPPGKRTFWGRHYTAY. Residues 41 to 61 traverse the membrane as a helical segment; it reads SMVWNVTFHICIWVSFSVNLL. At 62–71 the chain is on the extracellular side; sequence QSNSLETFCE. Residues 72 to 92 traverse the membrane as a helical segment; sequence SLCVTMPHTLYMLKLINVRRM. The Cytoplasmic segment spans residues 93 to 127; that stretch reads RGQMISSHWLLRLLDKRLGCDDERQIIMAGIERAE. Residues 128–148 traverse the membrane as a helical segment; the sequence is FIFRTIFRGLACTVVLGIIYI. Residues 149–171 are Extracellular-facing; sequence SASSEPTLMYPTWIPWNWRDSTS. The helical transmembrane segment at 172–192 threads the bilayer; that stretch reads AYLATAMLHTTALMANATLVL. The Cytoplasmic portion of the chain corresponds to 193–254; the sequence is NLSSYPGTYL…LRLFKSLERS (62 aa). Residues 255–275 form a helical membrane-spanning segment; sequence LSMTCFLQFFSTACAQCTICY. Residues 276–285 lie on the Extracellular side of the membrane; the sequence is FLLFGNVGIM. Residues 286–306 traverse the membrane as a helical segment; the sequence is RFMNMLFLLVILTTETLLLCY. The Cytoplasmic portion of the chain corresponds to 307–336; the sequence is TAELPCKEGESLLTAVYSCNWLSQSVNFRR. The helical transmembrane segment at 337 to 357 threads the bilayer; sequence LLLLMLARCQIPMILVSGVIV. Topologically, residues 358-387 are extracellular; sequence PISMKTFTVMIKGAYTMLTLLNEIRKTSLE.

It belongs to the insect chemoreceptor superfamily. Heteromeric odorant receptor channel (TC 1.A.69) family. Or2a subfamily. In terms of assembly, interacts with Orco. Complexes exist early in the endomembrane system in olfactory sensory neurons (OSNs), coupling these complexes to the conserved ciliary trafficking pathway. In terms of tissue distribution, expressed in ai2A olfactory sensory neurons in the antenna.

The protein localises to the cell membrane. Its function is as follows. Odorant receptor which mediates acceptance or avoidance behavior, depending on its substrates. The odorant receptor repertoire encodes a large collection of odor stimuli that vary widely in identity, intensity, and duration. May form a complex with Orco to form odorant-sensing units, providing sensitive and prolonged odorant signaling and calcium permeability. Involved in the preference for citrus fruits for oviposition, especially through the response to valencene, the primary ligand of Or19a. Larvae growing on citrus fruits suffer a reduced risk of parasitism since endoparasitoid wasps that parasitize larvae are strongly repelled by the smell of citrus, as well as by valencene. The sequence is that of Odorant receptor 19a (Or19a) from Drosophila melanogaster (Fruit fly).